A 221-amino-acid polypeptide reads, in one-letter code: Glutathione peroxidase 6 (221 aa).

The first 19 residues, 1–19, serve as a signal peptide directing secretion; sequence MTQQFWGPCLFSLFMAVLA. The active site involves Cys-73.

It belongs to the glutathione peroxidase family. In terms of tissue distribution, expressed in the Bowman glands.

It is found in the secreted. The catalysed reaction is 2 glutathione + H2O2 = glutathione disulfide + 2 H2O. This is Glutathione peroxidase 6 (Gpx6) from Rattus norvegicus (Rat).